A 196-amino-acid polypeptide reads, in one-letter code: uncharacterized protein (196 aa).

It to H.influenzae HI_0431.

This is an uncharacterized protein from Salmonella typhi.